The chain runs to 421 residues: Serine hydroxymethyltransferase (421 aa).

(6S)-5,6,7,8-tetrahydrofolate contacts are provided by residues leucine 121 and 125-127 (GHL). Residue lysine 230 is modified to N6-(pyridoxal phosphate)lysine. 355-357 (SPF) is a (6S)-5,6,7,8-tetrahydrofolate binding site.

This sequence belongs to the SHMT family. Homodimer. The cofactor is pyridoxal 5'-phosphate.

The protein localises to the cytoplasm. The enzyme catalyses (6R)-5,10-methylene-5,6,7,8-tetrahydrofolate + glycine + H2O = (6S)-5,6,7,8-tetrahydrofolate + L-serine. The protein operates within one-carbon metabolism; tetrahydrofolate interconversion. It functions in the pathway amino-acid biosynthesis; glycine biosynthesis; glycine from L-serine: step 1/1. Catalyzes the reversible interconversion of serine and glycine with tetrahydrofolate (THF) serving as the one-carbon carrier. This reaction serves as the major source of one-carbon groups required for the biosynthesis of purines, thymidylate, methionine, and other important biomolecules. Also exhibits THF-independent aldolase activity toward beta-hydroxyamino acids, producing glycine and aldehydes, via a retro-aldol mechanism. The chain is Serine hydroxymethyltransferase from Cellvibrio japonicus (strain Ueda107) (Pseudomonas fluorescens subsp. cellulosa).